The following is a 447-amino-acid chain: Na(+)-translocating NADH-quinone reductase subunit A (447 aa).

This sequence belongs to the NqrA family. In terms of assembly, composed of six subunits; NqrA, NqrB, NqrC, NqrD, NqrE and NqrF.

The enzyme catalyses a ubiquinone + n Na(+)(in) + NADH + H(+) = a ubiquinol + n Na(+)(out) + NAD(+). Its function is as follows. NQR complex catalyzes the reduction of ubiquinone-1 to ubiquinol by two successive reactions, coupled with the transport of Na(+) ions from the cytoplasm to the periplasm. NqrA to NqrE are probably involved in the second step, the conversion of ubisemiquinone to ubiquinol. In Neisseria meningitidis serogroup C / serotype 2a (strain ATCC 700532 / DSM 15464 / FAM18), this protein is Na(+)-translocating NADH-quinone reductase subunit A.